Consider the following 431-residue polypeptide: Histidinol dehydrogenase (431 aa).

NAD(+)-binding residues include Y124, Q187, and N210. Residues S236, Q258, and H261 each contribute to the substrate site. Zn(2+)-binding residues include Q258 and H261. Active-site proton acceptor residues include E325 and H326. Substrate-binding residues include H326, D359, E413, and H418. A Zn(2+)-binding site is contributed by D359. H418 is a binding site for Zn(2+).

Belongs to the histidinol dehydrogenase family. It depends on Zn(2+) as a cofactor.

The catalysed reaction is L-histidinol + 2 NAD(+) + H2O = L-histidine + 2 NADH + 3 H(+). Its pathway is amino-acid biosynthesis; L-histidine biosynthesis; L-histidine from 5-phospho-alpha-D-ribose 1-diphosphate: step 9/9. In terms of biological role, catalyzes the sequential NAD-dependent oxidations of L-histidinol to L-histidinaldehyde and then to L-histidine. This chain is Histidinol dehydrogenase, found in Legionella pneumophila subsp. pneumophila (strain Philadelphia 1 / ATCC 33152 / DSM 7513).